Reading from the N-terminus, the 422-residue chain is Phosphoribosylamine--glycine ligase (422 aa).

An ATP-grasp domain is found at 107–312; that stretch reads KEVMAAAGVR…LGQLLYAAGT (206 aa). Residue 138-193 coordinates ATP; that stretch reads PPVGDLSWVVKDDRLAAGKGVVVTSDRDVARTHAAGLLEAGHPVLLESYLDGPEVS. Residues E282 and N284 each coordinate Mg(2+).

The protein belongs to the GARS family. The cofactor is Mg(2+). Mn(2+) serves as cofactor.

It catalyses the reaction 5-phospho-beta-D-ribosylamine + glycine + ATP = N(1)-(5-phospho-beta-D-ribosyl)glycinamide + ADP + phosphate + H(+). Its pathway is purine metabolism; IMP biosynthesis via de novo pathway; N(1)-(5-phospho-D-ribosyl)glycinamide from 5-phospho-alpha-D-ribose 1-diphosphate: step 2/2. This chain is Phosphoribosylamine--glycine ligase, found in Mycobacterium leprae (strain TN).